Reading from the N-terminus, the 452-residue chain is MTKKIIAKKIIALVGRPNVGKSTLFNRLSMRKKAIVHDLPGVTRDRKYTDGRIGSFEFSLIDTPGFEENPDSFGKRLMEQTTKAINEADLICFMVDSRSGILPDDKLLSDFVRKYNKPAVLVINKCEKAFDFDKEYYKLGFDSMVAISAEHGTGMIDLYDEIIAKLPEEDSAEAEIHDPIKGDCLQIVVSGRPNAGKSTFINALINDERLLTGPEAGITRESIEIDWQYKGNHIKLIDTAGLRKKATITESLEKLSASDAINSIKFANTVILMIDALSPLKQQDLNIASHVANEGRSIVIVVNKWDLIKESEKEAFKEEFYYQINTTLPQVKGVPALFISAKNKQNIADVLDSCIKIYKTWNKKITTSKLNEWLNFTTEAHPLPLQKGGKRVRVKYMTQTKTRPPTFKLFSNNPEKITDSYTRYLVNNMREAFDMPGVPIRFNYIKTKNPYV.

2 consecutive EngA-type G domains span residues 9–170 (KIIA…PEED) and 185–362 (LQIV…KTWN). GTP contacts are provided by residues 15 to 22 (GRPNVGKS), 62 to 66 (DTPGF), 124 to 127 (NKCE), 191 to 198 (GRPNAGKS), 238 to 242 (DTAGL), and 303 to 306 (NKWD). The region spanning 363 to 448 (KKITTSKLNE…PIRFNYIKTK (86 aa)) is the KH-like domain.

This sequence belongs to the TRAFAC class TrmE-Era-EngA-EngB-Septin-like GTPase superfamily. EngA (Der) GTPase family. In terms of assembly, associates with the 50S ribosomal subunit.

Its function is as follows. GTPase that plays an essential role in the late steps of ribosome biogenesis. In Rickettsia bellii (strain OSU 85-389), this protein is GTPase Der.